A 616-amino-acid polypeptide reads, in one-letter code: uncharacterized protein (616 aa).

Disordered stretches follow at residues 166 to 243 and 272 to 298; these read SRTY…TPEL and DHEEEEGQDDDEETEIEIDRGGPIEEI. The span at 184–200 shows a compositional bias: basic and acidic residues; it reads RVDESRPSENSSRHDYV. The span at 221–237 shows a compositional bias: polar residues; that stretch reads TRTSNVTQTQPPTNQVF. Over residues 272 to 287 the composition is skewed to acidic residues; sequence DHEEEEGQDDDEETEI. The 75-residue stretch at 343 to 417 folds into the Ubiquitin-like domain; the sequence is ILIKLKFMND…VHCHISTTPY (75 aa).

This is an uncharacterized protein from Caenorhabditis elegans.